The following is a 391-amino-acid chain: Methionine import ATP-binding protein MetN 2 (391 aa).

One can recognise an ABC transporter domain in the interval 44 to 280; that stretch reads VHVGKVFATP…PRHGATRALL (237 aa). Residue 77 to 84 participates in ATP binding; sequence GRSGAGKS.

This sequence belongs to the ABC transporter superfamily. Methionine importer (TC 3.A.1.24) family. In terms of assembly, the complex is composed of two ATP-binding proteins (MetN), two transmembrane proteins (MetI) and a solute-binding protein (MetQ).

The protein localises to the cell inner membrane. The enzyme catalyses L-methionine(out) + ATP + H2O = L-methionine(in) + ADP + phosphate + H(+). It carries out the reaction D-methionine(out) + ATP + H2O = D-methionine(in) + ADP + phosphate + H(+). Part of the ABC transporter complex MetNIQ involved in methionine import. Responsible for energy coupling to the transport system. The sequence is that of Methionine import ATP-binding protein MetN 2 from Burkholderia ambifaria (strain ATCC BAA-244 / DSM 16087 / CCUG 44356 / LMG 19182 / AMMD) (Burkholderia cepacia (strain AMMD)).